The following is a 278-amino-acid chain: NAD kinase (278 aa).

D56 acts as the Proton acceptor in catalysis. NAD(+) contacts are provided by residues 56–57 (DG), 132–133 (NE), R158, D160, and 171–176 (TAYNKS).

The protein belongs to the NAD kinase family. A divalent metal cation serves as cofactor.

Its subcellular location is the cytoplasm. It carries out the reaction NAD(+) + ATP = ADP + NADP(+) + H(+). Functionally, involved in the regulation of the intracellular balance of NAD and NADP, and is a key enzyme in the biosynthesis of NADP. Catalyzes specifically the phosphorylation on 2'-hydroxyl of the adenosine moiety of NAD to yield NADP. In Streptococcus agalactiae serotype V (strain ATCC BAA-611 / 2603 V/R), this protein is NAD kinase.